Here is a 208-residue protein sequence, read N- to C-terminus: Imidazole glycerol phosphate synthase subunit HisH (208 aa).

The 206-residue stretch at 1–206 (MIVIIDYDTG…KEVIRSCKSS (206 aa)) folds into the Glutamine amidotransferase type-1 domain. Cys-79 (nucleophile) is an active-site residue. Residues His-181 and Glu-183 contribute to the active site.

As to quaternary structure, heterodimer of HisH and HisF.

The protein localises to the cytoplasm. The enzyme catalyses 5-[(5-phospho-1-deoxy-D-ribulos-1-ylimino)methylamino]-1-(5-phospho-beta-D-ribosyl)imidazole-4-carboxamide + L-glutamine = D-erythro-1-(imidazol-4-yl)glycerol 3-phosphate + 5-amino-1-(5-phospho-beta-D-ribosyl)imidazole-4-carboxamide + L-glutamate + H(+). It catalyses the reaction L-glutamine + H2O = L-glutamate + NH4(+). It functions in the pathway amino-acid biosynthesis; L-histidine biosynthesis; L-histidine from 5-phospho-alpha-D-ribose 1-diphosphate: step 5/9. IGPS catalyzes the conversion of PRFAR and glutamine to IGP, AICAR and glutamate. The HisH subunit catalyzes the hydrolysis of glutamine to glutamate and ammonia as part of the synthesis of IGP and AICAR. The resulting ammonia molecule is channeled to the active site of HisF. This chain is Imidazole glycerol phosphate synthase subunit HisH, found in Listeria monocytogenes serotype 4b (strain CLIP80459).